We begin with the raw amino-acid sequence, 390 residues long: Histamine H4 receptor (390 aa).

The Extracellular portion of the chain corresponds to 1 to 19 (MPDTNSTINLSLSTRVTLA). N-linked (GlcNAc...) asparagine glycans are attached at residues asparagine 5 and asparagine 9. Residues 20–40 (FFMSLVAFAIMLGNALVILAF) traverse the membrane as a helical segment. The Cytoplasmic segment spans residues 41–52 (VVDKNLRHRSSY). The helical transmembrane segment at 53-73 (FFLNLAISDFFVGVISIPLYI) threads the bilayer. The Extracellular portion of the chain corresponds to 74-87 (PHTLFEWDFGKEIC). Cysteine 87 and cysteine 164 form a disulfide bridge. A helical transmembrane segment spans residues 88 to 108 (VFWLTTDYLLCTASVYNIVLI). The Cytoplasmic portion of the chain corresponds to 109 to 131 (SYDRYLSVSNAVSYRTQHTGVLK). Residues 132 to 152 (IVTLMVAVWVLAFLVNGPMIL) form a helical membrane-spanning segment. Topologically, residues 153–172 (VSESWKDEGSECEPGFFSEW) are extracellular. The helical transmembrane segment at 173–193 (YILAITSFLEFVIPVILVAYF) threads the bilayer. The Cytoplasmic portion of the chain corresponds to 194-304 (NMNIYWSLWK…LLRARRLAKS (111 aa)). Residues 305–325 (LAILLGVFAVCWAPYSLFTIV) traverse the membrane as a helical segment. Topologically, residues 326 to 341 (LSFYSSATGPKSVWYR) are extracellular. Residues 342–362 (IAFWLQWFNSFVNPLLYPLCH) form a helical membrane-spanning segment. At 363–390 (KRFQKAFLKIFCIKKQPLPSQHSRSVSS) the chain is on the cytoplasmic side.

The protein belongs to the G-protein coupled receptor 1 family. Interacts with TSPAN4. In terms of tissue distribution, expressed primarily in the bone marrow and eosinophils. Shows preferential distribution in cells of immunological relevance such as T-cells, dendritic cells, monocytes, mast cells, neutrophils. Also expressed in a wide variety of peripheral tissues, including the heart, kidney, liver, lung, pancreas, skeletal muscle, prostate, small intestine, spleen, testis, colon, fetal liver and lymph node.

It localises to the cell membrane. The H4 subclass of histamine receptors could mediate the histamine signals in peripheral tissues. Displays a significant level of constitutive activity (spontaneous activity in the absence of agonist). This Homo sapiens (Human) protein is Histamine H4 receptor (HRH4).